The following is a 279-amino-acid chain: Probable autolysin LDP (279 aa).

Residues methionine 1–alanine 24 form the signal peptide. The 44-residue stretch at threonine 51–leucine 94 folds into the LysM domain. Residues valine 158–histidine 279 form the Peptidase C51 domain.

The enzyme catalyses Hydrolyzes the link between N-acetylmuramoyl residues and L-amino acid residues in certain cell-wall glycopeptides.. Its function is as follows. Has weak lytic activity toward S.aureus cells. The polypeptide is Probable autolysin LDP (Staphylococcus aureus (strain NCTC 8325 / PS 47)).